The chain runs to 443 residues: Acid phosphatase type 7 (443 aa).

The first 23 residues, 1-23 (MAAAPPPPPPLLLLLLCVCAVFA), serve as a signal peptide directing secretion. Asparagine 53, asparagine 76, and asparagine 126 each carry an N-linked (GlcNAc...) asparagine glycan. Fe cation-binding residues include aspartate 140, aspartate 169, and tyrosine 172. Aspartate 169 provides a ligand contact to Zn(2+). Asparagine 204 contacts Zn(2+). Residue asparagine 210 is glycosylated (N-linked (GlcNAc...) asparagine). Histidine 288 provides a ligand contact to Zn(2+). N-linked (GlcNAc...) asparagine glycosylation is present at asparagine 313. Residue histidine 338 coordinates Zn(2+). A Fe cation-binding site is contributed by histidine 340. Asparagine 355 and asparagine 409 each carry an N-linked (GlcNAc...) asparagine glycan.

Belongs to the metallophosphoesterase superfamily. Purple acid phosphatase family. Requires Fe cation as cofactor. Zn(2+) serves as cofactor.

The protein localises to the secreted. It carries out the reaction a phosphate monoester + H2O = an alcohol + phosphate. This Danio rerio (Zebrafish) protein is Acid phosphatase type 7.